We begin with the raw amino-acid sequence, 679 residues long: Methionine--tRNA ligase (679 aa).

Residues 14–24 (PYANGSIHLGH) carry the 'HIGH' region motif. Zn(2+) contacts are provided by cysteine 145, cysteine 148, cysteine 158, and cysteine 161. The 'KMSKS' region motif lies at 331 to 335 (KMSKS). An ATP-binding site is contributed by lysine 334. The region spanning 577–679 (TFAAVDLRVA…SGAKPGQRIK (103 aa)) is the tRNA-binding domain.

It belongs to the class-I aminoacyl-tRNA synthetase family. MetG type 1 subfamily. In terms of assembly, homodimer. Requires Zn(2+) as cofactor.

It is found in the cytoplasm. The enzyme catalyses tRNA(Met) + L-methionine + ATP = L-methionyl-tRNA(Met) + AMP + diphosphate. Is required not only for elongation of protein synthesis but also for the initiation of all mRNA translation through initiator tRNA(fMet) aminoacylation. This chain is Methionine--tRNA ligase, found in Pseudomonas putida (strain ATCC 700007 / DSM 6899 / JCM 31910 / BCRC 17059 / LMG 24140 / F1).